The following is a 506-amino-acid chain: Histone acetyltransferase esa-1 (506 aa).

A disordered region spans residues 1–24; the sequence is MSPPGGDATVGSDEKRQKGKATPD. The 53-residue stretch at 26-78 folds into the Tudor-knot domain; that stretch reads IKMGCIAMVMKEGQLRRAEILSIKDTKSGRQFYCNFDNFNKRLDEWVPAARID. Residues 82–215 form a disordered region; that stretch reads DVEWPNPDKD…LRTSGSMTQN (134 aa). The segment covering 87 to 98 has biased composition (basic and acidic residues); it reads NPDKDKQKDAKT. The segment covering 109–120 has biased composition (basic residues); that stretch reads QPSKKNNQKKAS. Residues 167-178 are compositionally biased toward basic and acidic residues; that stretch reads GGDKGVKRKADE. The region spanning 220–494 is the MYST-type HAT domain; the sequence is SRIRNISKVE…IDPERIQWKP (275 aa). The C2HC MYST-type zinc-finger motif lies at 253–278; sequence IYICEFCLSYYGELKSFVRHRQKCTL. The ESA1-RPD3 motif motif lies at 303–324; it reads RTWCRNLCLLSKMFLDHKTLYY. Residue Lys-320 is modified to N6-acetyllysine; by autocatalysis. Residues 361-365 and 370-376 contribute to the acetyl-CoA site; these read ACILT and QRKGYGR. Glu-396 functions as the Proton donor/acceptor in the catalytic mechanism. Ser-400 contributes to the acetyl-CoA binding site.

The protein belongs to the MYST (SAS/MOZ) family. Component of the NuA4 histone acetyltransferase complex. In terms of processing, autoacetylation at Lys-320 is required for proper function.

The protein localises to the nucleus. The protein resides in the chromosome. The catalysed reaction is L-lysyl-[histone] + acetyl-CoA = N(6)-acetyl-L-lysyl-[histone] + CoA + H(+). The enzyme catalyses L-lysyl-[protein] + acetyl-CoA = N(6)-acetyl-L-lysyl-[protein] + CoA + H(+). It catalyses the reaction 2-hydroxyisobutanoyl-CoA + L-lysyl-[protein] = N(6)-(2-hydroxyisobutanoyl)-L-lysyl-[protein] + CoA + H(+). It carries out the reaction (2E)-butenoyl-CoA + L-lysyl-[protein] = N(6)-(2E)-butenoyl-L-lysyl-[protein] + CoA + H(+). Catalytic component of the NuA4 histone acetyltransferase (HAT) complex which is involved in epigenetic transcriptional activation of selected genes principally by acetylation of nucleosomal histones H4, H3, H2B, H2A and H2A variant H2A.Z. Acetylates histone H4 to form H4K5ac, H4K8ac, H4K12ac and H4K16ac, histone H3 to form H3K14ac, and histone H2A to form H2AK4ac and H2AK7ac. The NuA4 complex is involved in the DNA damage response and is required for chromosome segregation. The NuA4 complex plays a direct role in repair of DNA double-strand breaks (DSBs) through homologous recombination. Recruitment to promoters depends on H3K4me. Also acetylates non-histone proteins. In addition to protein acetyltransferase, can use different acyl-CoA substrates, such as 2-hydroxyisobutanoyl-CoA (2-hydroxyisobutyryl-CoA) or (2E)-butenoyl-CoA (crotonyl-CoA), and is able to mediate protein 2-hydroxyisobutyrylation and crotonylation, respectively. This chain is Histone acetyltransferase esa-1 (esa-1), found in Neurospora crassa (strain ATCC 24698 / 74-OR23-1A / CBS 708.71 / DSM 1257 / FGSC 987).